The sequence spans 899 residues: Proline-rich transmembrane protein 4 (899 aa).

The signal sequence occupies residues 1-23; sequence MARHGCLGLGLFCCVLFAATVGP. Disordered regions lie at residues 110 to 152 and 295 to 340; these read LTEW…RRST and TVPI…PEAP. A run of 5 helical transmembrane segments spans residues 370–390, 392–412, 430–450, 467–487, and 500–520; these read VGAL…LLPW, CPPG…AGTT, ALAW…GLGL, LAAL…GSAA, and GLHA…SCWG. Residue Ser641 is modified to Phosphoserine. Disordered regions lie at residues 769-797 and 839-869; these read TGGR…AWPA and PSGS…ASEL. Low complexity predominate over residues 840-851; the sequence is SGSSPSLPASGS.

It is found in the membrane. In Homo sapiens (Human), this protein is Proline-rich transmembrane protein 4 (PRRT4).